Consider the following 223-residue polypeptide: Protein phosphatase 1 regulatory subunit 3C (223 aa).

Positions 104–209 (REQLTRKLVC…NNDGKNYSLH (106 aa)) constitute a CBM21 domain.

In terms of assembly, interacts with PPP1CC catalytic subunit of PP1 and associates with glycogen. Forms complexes with glycogen phosphorylase, glycogen synthase and phosphorylase kinase which is necessary for its regulation of PP1 activity.

Its function is as follows. Acts as a glycogen-targeting subunit for PP1 and regulates its activity. Activates glycogen synthase, reduces glycogen phosphorylase activity and limits glycogen breakdown. The sequence is that of Protein phosphatase 1 regulatory subunit 3C from Xenopus tropicalis (Western clawed frog).